The chain runs to 253 residues: Proproteinase E (253 aa).

Positions 1 to 11 (FSQPFSRPSSR) are cleaved as a propeptide — activation peptide. The Peptidase S1 domain occupies 12 to 251 (VVNGEDAVPY…FIDWIDETIA (240 aa)). 5 cysteine pairs are disulfide-bonded: C41–C57, C100–C103, C140–C206, C171–C187, and C196–C227.

It belongs to the peptidase S1 family. As to quaternary structure, monomer. The zymogen is secreted as a ternary complex composed of procarboxypeptidase A, chymotrypsinogen C and proproteinase E. As to expression, pancreas.

The protein localises to the secreted. The protein resides in the extracellular space. Functionally, may protect procarboxypeptidase A against denaturation in the acidic environment of the ruminant duodenum. This is Proproteinase E from Bos taurus (Bovine).